A 482-amino-acid chain; its full sequence is Ribosomal RNA small subunit methyltransferase F (482 aa).

Residues 119-125 (ASAPGSK), glutamate 143, aspartate 170, and aspartate 188 each bind S-adenosyl-L-methionine. Cysteine 241 serves as the catalytic Nucleophile.

Belongs to the class I-like SAM-binding methyltransferase superfamily. RsmB/NOP family.

It is found in the cytoplasm. The catalysed reaction is cytidine(1407) in 16S rRNA + S-adenosyl-L-methionine = 5-methylcytidine(1407) in 16S rRNA + S-adenosyl-L-homocysteine + H(+). Its function is as follows. Specifically methylates the cytosine at position 1407 (m5C1407) of 16S rRNA. This chain is Ribosomal RNA small subunit methyltransferase F, found in Shewanella sp. (strain ANA-3).